The sequence spans 771 residues: MDVSELEENLFAASDAKLHGDMCKELSAVYCKVLSIFPSLEEARPRSKSGIQTLCSLHIALEKAKNILQHCSECSKLYLAITGDAVLLKFEKAKSALIDSLRRVEDIVPSSIGSQILDIVGELEHTKFLLDPSEKEVGDRIIALLQQGKKFDNGSDSTELEIFHQAATRLSITSSRSALAERRALKKVIDRARVEEDKRKESIVAYLLHLMRKYSKLFRSEMMDENDSPCSTPCSPTGQGPNEDRVNAFGRQLSKFGSINYKPMNSRKSGQMPIPPEELRCPISLQLMYDPVIIASGQTYERVCIEKWFSDGHNSCPKTQQQLPHLSLTPNYCVKGLIASWCEQNGITVPTGPPESLDLNYWRLAMSDSESPNSKSVDSVGLCTPKDIRVVPLEESSTIESERQQKEKNNAPDEVDSEINVLEGYQDILAIVDKEEDLAKKCKVVENVRILLKDNEEARILMGANGFVEAFLQFLESAVHDNNAAAQETGAMALFNLAVNNNRNKELMLTSGVIPLLEKMISCSQSQGPATALYLNLSCLEKAKPVIGSSQAVSFFVNLLLQDTKTQCKLDALHALYNLSTYSPNIPTLLSSNIIKSLQVLASTGNHLWIEKSLAVLLNLASSREGKEEMITTQGMISTLATVLDTGDTVEQEQAVSCLVILCTGSESCIQMVLQEGVIPSLVSISVNGSPRGRDKSQKLLMLFREQRHRDQPSPNKEEAPRKTVSAPMAIPAPVSAPESEVKPLTKSISRRKTMTRPFSFLWKKSHSIHH.

A U-box domain is found at 274-348 (IPPEELRCPI…ASWCEQNGIT (75 aa)). The disordered stretch occupies residues 394–415 (EESSTIESERQQKEKNNAPDEV). Over residues 400–411 (ESERQQKEKNNA) the composition is skewed to basic and acidic residues. ARM repeat units lie at residues 456–499 (EEAR…NLAV), 502–542 (NRNK…CLEK), 544–581 (KPVIGSSQAVSFFVNLLLQDTKTQCKLDALHALYNLST), 583–622 (SPNIPTLLSSNIIKSLQVLASTGNHLWIEKSLAVLLNLAS), and 625–664 (EGKEEMITTQGMISTLATVLDTGDTVEQEQAVSCLVILCT). Positions 706–722 (EQRHRDQPSPNKEEAPR) are enriched in basic and acidic residues. Residues 706–751 (EQRHRDQPSPNKEEAPRKTVSAPMAIPAPVSAPESEVKPLTKSISR) are disordered.

It carries out the reaction S-ubiquitinyl-[E2 ubiquitin-conjugating enzyme]-L-cysteine + [acceptor protein]-L-lysine = [E2 ubiquitin-conjugating enzyme]-L-cysteine + N(6)-ubiquitinyl-[acceptor protein]-L-lysine.. It participates in protein modification; protein ubiquitination. Functions as an E3 ubiquitin ligase. In Arabidopsis thaliana (Mouse-ear cress), this protein is U-box domain-containing protein 6 (PUB6).